The sequence spans 314 residues: MPRTDNDSWDITQSVGATALGVAAARAAETESENPLISDPFARIFVDAAGKGMWSIYADPALLTKADDLEPDLRGRLQLMIDFMATRTAFFDEFFLAAADAGVRQVVILAAGLDARSWRLPWPDGTVVYELDQPKVLDFKSTTLREHGAQPKAELVNVPIDLRQDWPKALQEAGFDASRPAVWSAEGLVRYLPAQAQDLLFERIDALSVPGSRLASNVPDSGFTDPDRLARQREDMRRMRAAAAKLVDAEITDFDDLWYPEERTPVDSWLRERGWDVSTATFAELMARYGRSIPQGAQDSMPPTLYVSAQRRAG.

Residues D132 and 161 to 162 each bind S-adenosyl-L-methionine; that span reads DL.

This sequence belongs to the UPF0677 family.

Exhibits S-adenosyl-L-methionine-dependent methyltransferase activity. The protein is Putative S-adenosyl-L-methionine-dependent methyltransferase MAV_0301 of Mycobacterium avium (strain 104).